Consider the following 180-residue polypeptide: MKSVYFVAGLFIMLAQGSWQRSLQDTEEKPRSVSASQTDMLDDPDQMNEDKRHSQGTFTSDYSKYLDSRRAQQFLKWLLNVKRNRNNIAKRHDEFERHAEGTFTSDVSSYLEGQAAKEFIAWLVKGRGRRDFPEEVAIVEELGRRHADGSFSDEMNTILDNLATRDFINWLIQTKITDRK.

The first 20 residues, 1–20 (MKSVYFVAGLFIMLAQGSWQ), serve as a signal peptide directing secretion. Positions 23 to 58 (LQDTEEKPRSVSASQTDMLDDPDQMNEDKRHSQGTF) are disordered. Residue Ser-54 is modified to Phosphoserine. A propeptide spanning residues 84 to 89 (NRNNIA) is cleaved from the precursor. A phosphoserine mark is found at Ser-105 and Ser-108. Arg-127 bears the Arginine amide mark. Residues 131 to 145 (DFPEEVAIVEELGRR) constitute a propeptide that is removed on maturation. Phosphoserine occurs at positions 150 and 152.

Belongs to the glucagon family. Proglucagon is post-translationally processed in a tissue-specific manner in pancreatic A cells and intestinal L cells. In pancreatic A cells, the major bioactive hormone is glucagon cleaved by PCSK2/PC2. In the intestinal L cells PCSK1/PC1 liberates GLP-1, GLP-2, glicentin and oxyntomodulin. GLP-1 is further N-terminally truncated by post-translational processing in the intestinal L cells resulting in GLP-1(7-37) GLP-1-(7-36)amide. The C-terminal amidation is neither important for the metabolism of GLP-1 nor for its effects on the endocrine pancreas.

It localises to the secreted. Functionally, plays a key role in glucose metabolism and homeostasis. Regulates blood glucose by increasing gluconeogenesis and decreasing glycolysis. A counterregulatory hormone of insulin, raises plasma glucose levels in response to insulin-induced hypoglycemia. Plays an important role in initiating and maintaining hyperglycemic conditions in diabetes. Its function is as follows. Potent stimulator of glucose-dependent insulin release. Also stimulates insulin release in response to IL6. Plays important roles on gastric motility and the suppression of plasma glucagon levels. May be involved in the suppression of satiety and stimulation of glucose disposal in peripheral tissues, independent of the actions of insulin. Has growth-promoting activities on intestinal epithelium. May also regulate the hypothalamic pituitary axis (HPA) via effects on LH, TSH, CRH, oxytocin, and vasopressin secretion. Increases islet mass through stimulation of islet neogenesis and pancreatic beta cell proliferation. Inhibits beta cell apoptosis. Stimulates intestinal growth and up-regulates villus height in the small intestine, concomitant with increased crypt cell proliferation and decreased enterocyte apoptosis. The gastrointestinal tract, from the stomach to the colon is the principal target for GLP-2 action. Plays a key role in nutrient homeostasis, enhancing nutrient assimilation through enhanced gastrointestinal function, as well as increasing nutrient disposal. Stimulates intestinal glucose transport and decreases mucosal permeability. In terms of biological role, significantly reduces food intake. Inhibits gastric emptying in humans. Suppression of gastric emptying may lead to increased gastric distension, which may contribute to satiety by causing a sensation of fullness. Functionally, may modulate gastric acid secretion and the gastro-pyloro-duodenal activity. May play an important role in intestinal mucosal growth in the early period of life. This is Pro-glucagon (GCG) from Cavia porcellus (Guinea pig).